Consider the following 136-residue polypeptide: Translation initiation factor 5A (136 aa).

A Hypusine modification is found at Lys-37.

This sequence belongs to the eIF-5A family.

The protein localises to the cytoplasm. Functionally, functions by promoting the formation of the first peptide bond. The sequence is that of Translation initiation factor 5A from Thermococcus kodakarensis (strain ATCC BAA-918 / JCM 12380 / KOD1) (Pyrococcus kodakaraensis (strain KOD1)).